Consider the following 466-residue polypeptide: Probable sensor protein PcoS (466 aa).

The Cytoplasmic portion of the chain corresponds to 1 to 10 (MRFKISLTTR). A helical transmembrane segment spans residues 11 to 31 (LSLIFSAVMLTVWWLSSFILI). Residues 32-171 (STLNDYFDNQ…HTLLMDKLST (140 aa)) lie on the Periplasmic side of the membrane. The helical transmembrane segment at 172–192 (WLFWFNIGLVFISVFLGWLTT) threads the bilayer. The HAMP domain maps to 193–246 (RIGLKPLREMTSLASSMTVHSLDQRLNPDLAPPEISETMQEFNNMFDRLEGAFR). At 193–466 (RIGLKPLREM…IVFKVRLLMD (274 aa)) the chain is on the cytoplasmic side. One can recognise a Histidine kinase domain in the interval 254-466 (DIAHELRTPV…IVFKVRLLMD (213 aa)). Histidine 257 is modified (phosphohistidine; by autocatalysis).

It is found in the cell inner membrane. It carries out the reaction ATP + protein L-histidine = ADP + protein N-phospho-L-histidine.. Its function is as follows. Probable member of a two-component regulatory system PcoS/PcoR. May activate PcoR by phosphorylation. The polypeptide is Probable sensor protein PcoS (pcoS) (Escherichia coli).